Consider the following 948-residue polypeptide: Isoleucine--tRNA ligase (948 aa).

A 'HIGH' region motif is present at residues 58 to 68 (PYANGDIHIGH). Residue Glu-566 participates in L-isoleucyl-5'-AMP binding. Positions 607–611 (KMSKS) match the 'KMSKS' region motif. Lys-610 lines the ATP pocket. Residues Cys-911, Cys-914, Cys-931, and Cys-934 each contribute to the Zn(2+) site.

The protein belongs to the class-I aminoacyl-tRNA synthetase family. IleS type 1 subfamily. In terms of assembly, monomer. The cofactor is Zn(2+).

It is found in the cytoplasm. It catalyses the reaction tRNA(Ile) + L-isoleucine + ATP = L-isoleucyl-tRNA(Ile) + AMP + diphosphate. Its function is as follows. Catalyzes the attachment of isoleucine to tRNA(Ile). As IleRS can inadvertently accommodate and process structurally similar amino acids such as valine, to avoid such errors it has two additional distinct tRNA(Ile)-dependent editing activities. One activity is designated as 'pretransfer' editing and involves the hydrolysis of activated Val-AMP. The other activity is designated 'posttransfer' editing and involves deacylation of mischarged Val-tRNA(Ile). This is Isoleucine--tRNA ligase from Vibrio vulnificus (strain YJ016).